The following is a 409-amino-acid chain: Nucleoprotein (409 aa).

Disordered stretches follow at residues 1 to 32 (MASG…SSGN), 44 to 69 (LNSP…QQHG), 121 to 145 (ADVK…LRFS), 164 to 195 (RSGR…SEGD), and 238 to 259 (VDQV…DKMN). Residues 15 to 31 (PVIKLGGPKPPKVGSSG) are compositionally biased toward low complexity. An RNA-binding region spans residues 29 to 160 (SSGNASWFQA…GNFRWDFIPL (132 aa)). The CoV N NTD domain maps to 31-156 (GNASWFQAIK…GGPDGNFRWD (126 aa)). A compositionally biased stretch (low complexity) spans 164–179 (RSGRSTAASSAASSRA). 2 stretches are compositionally biased toward basic and acidic residues: residues 180–192 (PSRD…RSGS) and 247–259 (KGKE…DKMN). 2 positions are modified to phosphoserine; by host: Ser-190 and Ser-192. In terms of domain architecture, CoV N CTD spans 215-331 (TKAKADEMAH…QCVDGVGTRP (117 aa)). Positions 226–333 (RYCKRTIPPG…VDGVGTRPKD (108 aa)) are dimerization. The cysteines at positions 320 and 323 are disulfide-linked. The tract at residues 326–409 (GVGTRPKDDE…GDSALGENEL (84 aa)) is disordered. Low complexity predominate over residues 341 to 358 (RSSSRPATRTSSPALRQQ). Residues 368–384 (KQDDEVDKALTSDEERN) are compositionally biased toward basic and acidic residues. Thr-378 is subject to Phosphothreonine; by host. Phosphoserine; by host is present on Ser-379.

This sequence belongs to the gammacoronavirus nucleocapsid protein family. In terms of assembly, homooligomer. Both monomeric and oligomeric forms interact with RNA. Interacts with protein M. Interacts with NSP3; this interaction serves to tether the genome to the newly translated replicase-transcriptase complex at a very early stage of infection. Post-translationally, ADP-ribosylated. The ADP-ribosylation is retained in the virion during infection. Phosphorylated on serine and threonine residues.

It localises to the virion. The protein resides in the host endoplasmic reticulum-Golgi intermediate compartment. The protein localises to the host Golgi apparatus. Functionally, packages the positive strand viral genome RNA into a helical ribonucleocapsid (RNP) and plays a fundamental role during virion assembly through its interactions with the viral genome and membrane protein M. Plays an important role in enhancing the efficiency of subgenomic viral RNA transcription as well as viral replication. The protein is Nucleoprotein of Gallus gallus (Chicken).